Consider the following 383-residue polypeptide: GTPase-interacting component 2 (383 aa).

Positions 63–106 are disordered; the sequence is SNKKNIELPPLSPNSHPSCHHRRSNSNSAKSKESSSSSSSANKT. Low complexity predominate over residues 87-105; sequence NSNSAKSKESSSSSSSANK. The CRIB domain maps to 134-147; the sequence is ISTPFDFQHISHAD. Polar residues predominate over residues 155–165; that stretch reads EQLQEPSSLST. The interval 155–189 is disordered; the sequence is EQLQEPSSLSTEIKDDYTSSSSKRDSKSLNKAFVT. Residues 166–182 show a composition bias toward basic and acidic residues; the sequence is EIKDDYTSSSSKRDSKS. 5 positions are modified to phosphoserine: Ser-254, Ser-258, Ser-337, Ser-345, and Ser-367. The tract at residues 319-361 is disordered; the sequence is ETPNSNKDSAKAFFPSRQSPLPKRRNSIATPSPQSKFSYSDSP. A compositionally biased stretch (polar residues) spans 345–361; sequence SIATPSPQSKFSYSDSP.

Belongs to the BORG/CEP family. Interacts with GTP-bound CDC42.

It localises to the bud neck. It is found in the bud tip. The protein resides in the cytoplasm. The protein localises to the cell cortex. Its subcellular location is the cytoskeleton. Required for cell size and shape control, bud site selection, bud emergence, actin cytoskeletal organization, mitotic spindle orientation/positioning, and mating projection formation in response to mating pheromone. This Saccharomyces cerevisiae (strain ATCC 204508 / S288c) (Baker's yeast) protein is GTPase-interacting component 2 (GIC2).